An 89-amino-acid polypeptide reads, in one-letter code: Small ribosomal subunit protein uS15 (89 aa).

Basic and acidic residues predominate over residues 1–20; the sequence is MSITAERKAELIKTHARGEA. Positions 1 to 24 are disordered; sequence MSITAERKAELIKTHARGEADTGS.

The protein belongs to the universal ribosomal protein uS15 family. As to quaternary structure, part of the 30S ribosomal subunit. Forms a bridge to the 50S subunit in the 70S ribosome, contacting the 23S rRNA.

Its function is as follows. One of the primary rRNA binding proteins, it binds directly to 16S rRNA where it helps nucleate assembly of the platform of the 30S subunit by binding and bridging several RNA helices of the 16S rRNA. Functionally, forms an intersubunit bridge (bridge B4) with the 23S rRNA of the 50S subunit in the ribosome. This chain is Small ribosomal subunit protein uS15, found in Phenylobacterium zucineum (strain HLK1).